The sequence spans 92 residues: UPF0473 protein OB2006 (92 aa).

It belongs to the UPF0473 family.

This Oceanobacillus iheyensis (strain DSM 14371 / CIP 107618 / JCM 11309 / KCTC 3954 / HTE831) protein is UPF0473 protein OB2006.